The following is a 593-amino-acid chain: MTSLSPPVVTTPTVPNPATKPLSPFSQNNSQVSLLTKPKRSFARKVSCKATNNDQNDQAQSKLDRRNVLLGLGGLYGVAGMGTDPFAFAKPIAPPDVSKCGPADLPQGAVPTNCCPPPSTKIIDFKLPAPAKLRIRPPAHAVDQAYRDKYYKAMELMKALPDDDPRSFKQQAAVHCAYCDGAYDQVGFPELELQIHNSWLFFPFHRYYLYFFEKILGKLINDPTFALPFWNWDSPAGMPLPAIYADPKSPLYDKLRSANHQPPTLVDLDYNGTEDNVSKETTINANLKIMYRQMVSNSKNAKLFFGNPYRAGDEPDPGGGSIEGTPHAPVHLWTGDNTQPNFEDMGNFYSAGRDPIFFAHHSNVDRMWSIWKTLGGKRTDLTDSDWLDSGFLFYNENAELVRVKVRDCLETKNLGYVYQDVDIPWLSSKPTPRRAKVALSKVAKKLGVAHAAVASSSKVVAGTEFPISLGSKISTVVKRPKQKKRSKKAKEDEEEILVIEGIEFDRDVAVKFDVYVNDVDDLPSGPDKTEFAGSFVSVPHSHKHKKKMNTILRLGLTDLLEEIEAEDDDSVVVTLVPKFGAVKIGGIKIEFAS.

A compositionally biased stretch (low complexity) spans 1–13 (MTSLSPPVVTTPT). Residues 1-34 (MTSLSPPVVTTPTVPNPATKPLSPFSQNNSQVSL) form a disordered region. Residues 1–89 (MTSLSPPVVT…GMGTDPFAFA (89 aa)) constitute a chloroplast transit peptide. Residues 24–34 (PFSQNNSQVSL) show a composition bias toward polar residues. Intrachain disulfides connect C100–C115 and C114–C176. Cu cation-binding residues include H175, H196, H205, H327, H331, and H361. Residues 179 to 196 (CDGAYDQVGFPELELQIH) constitute a cross-link (2'-(S-cysteinyl)-histidine (Cys-His)).

The protein belongs to the tyrosinase family. The cofactor is Cu(2+).

Its subcellular location is the plastid. The protein resides in the chloroplast thylakoid lumen. It catalyses the reaction 2 catechol + O2 = 2 1,2-benzoquinone + 2 H2O. Catalyzes the oxidation of mono- and o-diphenols to o-diquinones. This is Polyphenol oxidase, chloroplastic from Malus domestica (Apple).